The primary structure comprises 24 residues: Outer membrane protein (24 aa).

The protein belongs to the Gram-negative porin family. Homotrimer.

It is found in the cell outer membrane. Functionally, forms pores that allow passive diffusion of small molecules across the outer membrane. This is Outer membrane protein from Sodalis glossinidius.